A 524-amino-acid chain; its full sequence is Beta-glucosidase 21 (524 aa).

A signal peptide spans 1–24 (MALQKFPLMGLLLLLTILVSVTTA). Residue Gln55 participates in a beta-D-glucoside binding. Asn61 carries an N-linked (GlcNAc...) asparagine glycan. A beta-D-glucoside-binding positions include His158 and 203-204 (NE). Glu204 functions as the Proton donor in the catalytic mechanism. A disulfide bond links Cys223 and Cys230. A beta-D-glucoside contacts are provided by residues Tyr346, Glu418, Trp468, 475-476 (EW), and Phe484. Residue Glu418 is the Nucleophile of the active site. N-linked (GlcNAc...) asparagine glycosylation is present at Asn494. The short motif at 521-524 (RDEL) is the Prevents secretion from ER element.

The protein belongs to the glycosyl hydrolase 1 family. Component of the PYK10 complex, at least composed of PYK10/BGLU23, BGLU21, BGLU22, JAL22, JAL23, PBP1/JAL30, PBP2/JAL31, JAL32, JAL33, JAL34, JAL35, GLL22 and GLL23. Expressed exclusively in roots.

It localises to the endoplasmic reticulum lumen. The enzyme catalyses Hydrolysis of terminal, non-reducing beta-D-glucosyl residues with release of beta-D-glucose.. With respect to regulation, activated upon binding to PBP1 or PBP2. Its function is as follows. Beta-D-glucosidase active on scopolin &gt;&gt; esculin &gt;&gt; 4-MU-glucoside &gt; DIMBOA-glucoside. No activity with pNP-glucoside, oNP-glucoside and sinigrin as substrates. In Arabidopsis thaliana (Mouse-ear cress), this protein is Beta-glucosidase 21.